A 368-amino-acid chain; its full sequence is Ribosomal RNA large subunit methyltransferase M (368 aa).

S-adenosyl-L-methionine-binding positions include serine 192, 225 to 228 (APGG), aspartate 244, aspartate 264, and aspartate 281. Residue lysine 310 is the Proton acceptor of the active site.

It belongs to the class I-like SAM-binding methyltransferase superfamily. RNA methyltransferase RlmE family. RlmM subfamily. In terms of assembly, monomer.

It is found in the cytoplasm. It carries out the reaction cytidine(2498) in 23S rRNA + S-adenosyl-L-methionine = 2'-O-methylcytidine(2498) in 23S rRNA + S-adenosyl-L-homocysteine + H(+). Functionally, catalyzes the 2'-O-methylation at nucleotide C2498 in 23S rRNA. In Colwellia psychrerythraea (strain 34H / ATCC BAA-681) (Vibrio psychroerythus), this protein is Ribosomal RNA large subunit methyltransferase M.